Reading from the N-terminus, the 398-residue chain is tRNA(Ile)-lysidine synthase (398 aa).

ATP is bound at residue S25–S30.

It belongs to the tRNA(Ile)-lysidine synthase family.

The protein localises to the cytoplasm. The enzyme catalyses cytidine(34) in tRNA(Ile2) + L-lysine + ATP = lysidine(34) in tRNA(Ile2) + AMP + diphosphate + H(+). Ligates lysine onto the cytidine present at position 34 of the AUA codon-specific tRNA(Ile) that contains the anticodon CAU, in an ATP-dependent manner. Cytidine is converted to lysidine, thus changing the amino acid specificity of the tRNA from methionine to isoleucine. The sequence is that of tRNA(Ile)-lysidine synthase from Francisella tularensis subsp. novicida (strain U112).